Consider the following 286-residue polypeptide: tRNA (guanine-N(7)-)-methyltransferase (286 aa).

Phosphoserine is present on residues Ser-7 and Ser-59. Residues Gly-103, 126-127 (EI), 161-162 (NA), and Cys-181 each bind S-adenosyl-L-methionine. Asp-184 is an active-site residue. 259–261 (TEE) is an S-adenosyl-L-methionine binding site.

The protein belongs to the class I-like SAM-binding methyltransferase superfamily. TrmB family. As to quaternary structure, forms a complex with TRM82.

It localises to the nucleus. The enzyme catalyses guanosine(46) in tRNA + S-adenosyl-L-methionine = N(7)-methylguanosine(46) in tRNA + S-adenosyl-L-homocysteine. It functions in the pathway tRNA modification; N(7)-methylguanine-tRNA biosynthesis. In terms of biological role, methyltransferase that catalyzes the formation of N(7)-methylguanine at position 46 (m7G46) in tRNA, a modification required to maintain stability of tRNAs; its absence resulting in tRNA decay. Both the D-stem and T-stem structures of tRNAs are required for efficient methyltransferase activity. In Saccharomyces cerevisiae (strain RM11-1a) (Baker's yeast), this protein is tRNA (guanine-N(7)-)-methyltransferase.